A 561-amino-acid polypeptide reads, in one-letter code: Zinc finger protein with KRAB and SCAN domains 1 (561 aa).

The segment at 1-51 (MMTAESRETTGLSPQAAQEKDGIVIVKVEEEDEEDHMWGQDSSLQETPPPD) is disordered. The residue at position 13 (serine 13) is a Phosphoserine. Residue lysine 27 forms a Glycyl lysine isopeptide (Lys-Gly) (interchain with G-Cter in SUMO2) linkage. Positions 56-138 (RQRFRRFCYQ…TLLEDLELDL (83 aa)) constitute an SCAN box domain. Residues 163-187 (VQESSSFDHHETAQSHFKHSSRKPR) are disordered. Positions 178–187 (HFKHSSRKPR) are enriched in basic residues. Glycyl lysine isopeptide (Lys-Gly) (interchain with G-Cter in SUMO2) cross-links involve residues lysine 180 and lysine 226. Positions 225 to 304 (VKIEDMAVSL…QKEFGEKREQ (80 aa)) constitute a KRAB domain. The span at 260–275 (NVFSQGSENRNGNEST) shows a compositional bias: polar residues. The segment at 260-372 (NVFSQGSENR…NTPEEAPSGA (113 aa)) is disordered. Composition is skewed to basic and acidic residues over residues 276–286 (SKAEVKEDSTS) and 294–349 (FQKE…EKGK). Glycyl lysine isopeptide (Lys-Gly) (interchain with G-Cter in SUMO2) cross-links involve residues lysine 277, lysine 296, lysine 301, and lysine 336. A compositionally biased stretch (polar residues) spans 355–365 (FSLSANFNNTP). Lysine 373 participates in a covalent cross-link: Glycyl lysine isopeptide (Lys-Gly) (interchain with G-Cter in SUMO2). C2H2-type zinc fingers lie at residues 375–397 (HRCD…KIIH), 403–425 (YECN…QRIH), 431–453 (HECN…QRIH), 459–481 (YECN…QRIH), 487–509 (YECS…RRIH), and 515–537 (YKCT…HRIH). Glycyl lysine isopeptide (Lys-Gly) (interchain with G-Cter in SUMO2) cross-links involve residues lysine 410, lysine 438, and lysine 476. Residue lysine 558 forms a Glycyl lysine isopeptide (Lys-Gly) (interchain with G-Cter in SUMO2) linkage.

It belongs to the krueppel C2H2-type zinc-finger protein family.

The protein localises to the nucleus. Its function is as follows. May be involved in transcriptional regulation. The sequence is that of Zinc finger protein with KRAB and SCAN domains 1 (Zkscan1) from Mus musculus (Mouse).